The chain runs to 108 residues: UPF0060 membrane protein Sputw3181_1172 (108 aa).

4 helical membrane-spanning segments follow: residues 3–23 (VITT…GCYL), 31–51 (GASA…AWLL), 63–83 (AAYG…VDGI), and 87–107 (RWDL…MFAP).

Belongs to the UPF0060 family.

The protein localises to the cell inner membrane. The sequence is that of UPF0060 membrane protein Sputw3181_1172 from Shewanella sp. (strain W3-18-1).